The primary structure comprises 400 residues: MASLALTSPPSVKIPSYLSSSSSSLFSRSSISFRTTESRSRICVSGYAKCNLPKALNGNARVPIINETTIPKFFDSSRLEKSVSRNNTKLKLFSGTANPALSQEIAWYMGLELGKVSIKRFADGEIYVQLKESVRGCDVFLVQPTCTPTNENLMELLIMVDACRRASAKKVTAVIPYFGYARADRKTQGRESIAAKLVANLITEAGADRVLACDLHSGQSMGYFDIPVDHVYCQPVILDYLASKSISSEDLVVVSPDVGGVARARAFAKKLSDAPLAIVDKRRHGHNVAEVMNLIGDVKGKVAVMVDDIIDTAGTIVKGAALLHEEGAREVYACCTHAVFSPPAIERLSSGLLQEVIVTNTLPVAEKNYFPQLTILSVANLLGETIWRVHDDSSVSSIFL.

The transit peptide at 1–44 (MASLALTSPPSVKIPSYLSSSSSSLFSRSSISFRTTESRSRICV) directs the protein to the chloroplast. Positions 214, 216, 225, and 229 each coordinate Mg(2+). Positions 300–315 (GKVAVMVDDIIDTAGT) are binding of phosphoribosylpyrophosphate.

It belongs to the ribose-phosphate pyrophosphokinase family.

It is found in the plastid. The protein localises to the chloroplast. It catalyses the reaction D-ribose 5-phosphate + ATP = 5-phospho-alpha-D-ribose 1-diphosphate + AMP + H(+). This is Ribose-phosphate pyrophosphokinase 2, chloroplastic (PRS2) from Arabidopsis thaliana (Mouse-ear cress).